The sequence spans 148 residues: Ubiquitin-conjugating enzyme E2 8 (148 aa).

In terms of domain architecture, UBC core spans Met1–Met147. Catalysis depends on Cys85, which acts as the Glycyl thioester intermediate.

It belongs to the ubiquitin-conjugating enzyme family. In terms of assembly, interacts with CIP8, CHIP, NLA and XERICO. In terms of tissue distribution, highest expression in young stems, old leaves. Lowest levels in floral buds, anthers and young leaves.

It carries out the reaction S-ubiquitinyl-[E1 ubiquitin-activating enzyme]-L-cysteine + [E2 ubiquitin-conjugating enzyme]-L-cysteine = [E1 ubiquitin-activating enzyme]-L-cysteine + S-ubiquitinyl-[E2 ubiquitin-conjugating enzyme]-L-cysteine.. The protein operates within protein modification; protein ubiquitination. Accepts the ubiquitin from the E1 complex and catalyzes its covalent attachment to other proteins. Mediates the selective degradation of short-lived and abnormal proteins. This Arabidopsis thaliana (Mouse-ear cress) protein is Ubiquitin-conjugating enzyme E2 8 (UBC8).